The sequence spans 261 residues: Kallikrein-1 (261 aa).

Residues 1-18 (MRFLILFLALSLGGIDAA) form the signal peptide. Residues 19-24 (PPVQSR) constitute a propeptide, activation peptide. The Peptidase S1 domain occupies 25 to 258 (IVGGFNCEKN…FNTWIRETMA (234 aa)). Disulfide bonds link C31–C173, C50–C66, C152–C219, C184–C198, and C209–C234. Catalysis depends on H65, which acts as the Charge relay system. An N-linked (GlcNAc...) asparagine glycan is attached at N102. D120 (charge relay system) is an active-site residue. Residue S213 is the Charge relay system of the active site.

This sequence belongs to the peptidase S1 family. Kallikrein subfamily.

It carries out the reaction Preferential cleavage of Arg-|-Xaa bonds in small molecule substrates. Highly selective action to release kallidin (lysyl-bradykinin) from kininogen involves hydrolysis of Met-|-Xaa or Leu-|-Xaa.. In terms of biological role, glandular kallikreins cleave Met-Lys and Arg-Ser bonds in kininogen to release Lys-bradykinin. This is Kallikrein-1 (Klk1) from Mus musculus (Mouse).